The primary structure comprises 700 residues: Elongation factor G (700 aa).

The tr-type G domain occupies 8–290 (DKYRNIGISA…AVVELLPSPL (283 aa)). GTP contacts are provided by residues 17–24 (AHIDAGKT), 88–92 (DTPGH), and 142–145 (NKMD).

It belongs to the TRAFAC class translation factor GTPase superfamily. Classic translation factor GTPase family. EF-G/EF-2 subfamily.

Its subcellular location is the cytoplasm. Functionally, catalyzes the GTP-dependent ribosomal translocation step during translation elongation. During this step, the ribosome changes from the pre-translocational (PRE) to the post-translocational (POST) state as the newly formed A-site-bound peptidyl-tRNA and P-site-bound deacylated tRNA move to the P and E sites, respectively. Catalyzes the coordinated movement of the two tRNA molecules, the mRNA and conformational changes in the ribosome. This chain is Elongation factor G, found in Polynucleobacter necessarius subsp. necessarius (strain STIR1).